The following is a 303-amino-acid chain: Epimerase family protein YfhF (303 aa).

It belongs to the NAD(P)-dependent epimerase/dehydratase family. SDR39U1 subfamily.

This chain is Epimerase family protein YfhF (yfhF), found in Bacillus subtilis (strain 168).